The sequence spans 337 residues: Ribonucleoside-diphosphate reductase small subunit (337 aa).

Residues 1-22 (MDPAVSPASTDPLDTHASGAGA) form a disordered region. The Fe cation site is built by Asp91, Glu121, and His124. Residue Tyr128 is part of the active site. The chain crosses the membrane as a helical span at residues 177–197 (FILMILIEGVFFAASFAAIAY). 3 residues coordinate Fe cation: Glu184, Glu218, and His221.

The protein belongs to the ribonucleoside diphosphate reductase small chain family. Heterotetramer composed of a homodimer of the large subunit (R1) and a homodimer of the small subunit (R2). Larger multisubunit protein complex are also active, composed of (R1)n(R2)n. Fe cation serves as cofactor.

The protein localises to the host membrane. It catalyses the reaction a 2'-deoxyribonucleoside 5'-diphosphate + [thioredoxin]-disulfide + H2O = a ribonucleoside 5'-diphosphate + [thioredoxin]-dithiol. Ribonucleoside-diphosphate reductase holoenzyme provides the precursors necessary for viral DNA synthesis. Allows virus growth in non-dividing cells, as well as reactivation from latency in infected hosts. Catalyzes the biosynthesis of deoxyribonucleotides from the corresponding ribonucleotides. This Human herpesvirus 2 (strain 333) (HHV-2) protein is Ribonucleoside-diphosphate reductase small subunit.